The sequence spans 842 residues: MutS protein homolog him-14 (842 aa).

The segment at 1–21 is disordered; sequence MYSNKSFQRRQRQQVAESRSE. 588-595 lines the ATP pocket; the sequence is GPNMAGKS.

Belongs to the DNA mismatch repair MutS family. In terms of assembly, heterooligomer of him-14 and msh-5.

It is found in the nucleus. Functionally, required during the pachytene stage of meiotic prophase for the formation of crossovers between homologous chromosomes. Together with msh-5 and zhp-3 plays a role in the activation of DNA damage-dependent apoptosis at the DNA damage checkpoint in pachytene cells. Not needed for pairing or synapsis. May promote crossing over by interfering with Holliday junction branch migration. Has no apparent role in DNA mismatch repair. This Caenorhabditis elegans protein is MutS protein homolog him-14.